We begin with the raw amino-acid sequence, 456 residues long: MEKLWGGRFQGKSEAWIDDFGASISFDQKMAKEDLAGSLAHVAMLSKCGIIPASEAAEITAGLKILQEKLALGELEFSTVNEDIHLNIEKLLHEEIGPVAGKLHTARSRNDQVATDMHLYLKQAVAEIIQSLKHLRVVLVQKAEANVETIMPGYTHLQHAQPISFAHHLLAYFGMFTRDLERLEESVKRIDISPLGSAALAGTTFPIDRAYSAELLGFSAVYENSLDGVSDRDFIIEFLSNSSILMMHLSRFCEELILWTSHEFQFVELTDAFSTGSSIMPQKKNPDMAELIRGKTGRVYGNLFGMLTVLKGLPLAYNKDLQEDKEGMFDTLETVQTCLDIFAGMIETMKINTEIMEESTQKDFSNATELADYLAKKGVPFREAHEIVGKLVLECTQNGIYLQDVALSHYQEINPLIDDDIYVVLSSKTAVQKRNSYGGTGFDQIKVALENAKKTL.

This sequence belongs to the lyase 1 family. Argininosuccinate lyase subfamily.

The protein localises to the cytoplasm. The catalysed reaction is 2-(N(omega)-L-arginino)succinate = fumarate + L-arginine. Its pathway is amino-acid biosynthesis; L-arginine biosynthesis; L-arginine from L-ornithine and carbamoyl phosphate: step 3/3. The polypeptide is Argininosuccinate lyase (Listeria monocytogenes serotype 4b (strain F2365)).